The primary structure comprises 174 residues: Crossover junction endodeoxyribonuclease RuvC (174 aa).

Residues Asp8, Glu69, and Asp141 contribute to the active site. The Mg(2+) site is built by Asp8, Glu69, and Asp141.

The protein belongs to the RuvC family. Homodimer which binds Holliday junction (HJ) DNA. The HJ becomes 2-fold symmetrical on binding to RuvC with unstacked arms; it has a different conformation from HJ DNA in complex with RuvA. In the full resolvosome a probable DNA-RuvA(4)-RuvB(12)-RuvC(2) complex forms which resolves the HJ. Mg(2+) is required as a cofactor.

Its subcellular location is the cytoplasm. The enzyme catalyses Endonucleolytic cleavage at a junction such as a reciprocal single-stranded crossover between two homologous DNA duplexes (Holliday junction).. Its function is as follows. The RuvA-RuvB-RuvC complex processes Holliday junction (HJ) DNA during genetic recombination and DNA repair. Endonuclease that resolves HJ intermediates. Cleaves cruciform DNA by making single-stranded nicks across the HJ at symmetrical positions within the homologous arms, yielding a 5'-phosphate and a 3'-hydroxyl group; requires a central core of homology in the junction. The consensus cleavage sequence is 5'-(A/T)TT(C/G)-3'. Cleavage occurs on the 3'-side of the TT dinucleotide at the point of strand exchange. HJ branch migration catalyzed by RuvA-RuvB allows RuvC to scan DNA until it finds its consensus sequence, where it cleaves and resolves the cruciform DNA. The protein is Crossover junction endodeoxyribonuclease RuvC of Xanthomonas campestris pv. campestris (strain 8004).